Reading from the N-terminus, the 583-residue chain is L-arabonate dehydratase (583 aa).

The [4Fe-4S] cluster site is built by C56, C124, and C197.

The protein belongs to the IlvD/Edd family. In terms of assembly, homodimer. It depends on [4Fe-4S] cluster as a cofactor.

The enzyme catalyses L-arabinonate = 2-dehydro-3-deoxy-L-arabinonate + H2O. Its activity is regulated as follows. Activity is enhanced by Mg(2+), being optimal with a concentration of 1-10 mM Mg(2+). Catalyzes the dehydration of L-arabonate to L-2-keto-3-deoxyarabonate (L-KDA). Is involved in a degradation pathway of L-arabinose that allows A.brasilense to grow on L-arabinose as a sole carbon source. To a lesser extent, can also use D-xylonate as substrate, but not D-galactonate, D-arabonate, and D-gluconate. In Azospirillum brasilense, this protein is L-arabonate dehydratase (araC).